Consider the following 153-residue polypeptide: Large ribosomal subunit protein uL22 (153 aa).

Positions 110–153 (ITVIVESRPPKQKGASAASARSRRAQGSKAAATKKSAETKEGSE) are disordered. Basic and acidic residues predominate over residues 144–153 (KSAETKEGSE).

It belongs to the universal ribosomal protein uL22 family. As to quaternary structure, part of the 50S ribosomal subunit.

In terms of biological role, this protein binds specifically to 23S rRNA; its binding is stimulated by other ribosomal proteins, e.g. L4, L17, and L20. It is important during the early stages of 50S assembly. It makes multiple contacts with different domains of the 23S rRNA in the assembled 50S subunit and ribosome. Its function is as follows. The globular domain of the protein is located near the polypeptide exit tunnel on the outside of the subunit, while an extended beta-hairpin is found that lines the wall of the exit tunnel in the center of the 70S ribosome. This is Large ribosomal subunit protein uL22 from Mycolicibacterium smegmatis (strain ATCC 700084 / mc(2)155) (Mycobacterium smegmatis).